A 250-amino-acid chain; its full sequence is UPF0309 protein BH0227 (250 aa).

Residues 31-214 form the SIS domain; the sequence is VAESIQNGGI…KRMADNGYEP (184 aa).

Belongs to the UPF0309 family.

The polypeptide is UPF0309 protein BH0227 (Halalkalibacterium halodurans (strain ATCC BAA-125 / DSM 18197 / FERM 7344 / JCM 9153 / C-125) (Bacillus halodurans)).